Reading from the N-terminus, the 678-residue chain is Glycine--tRNA ligase beta subunit (678 aa).

This sequence belongs to the class-II aminoacyl-tRNA synthetase family. As to quaternary structure, tetramer of two alpha and two beta subunits.

The protein localises to the cytoplasm. The enzyme catalyses tRNA(Gly) + glycine + ATP = glycyl-tRNA(Gly) + AMP + diphosphate. This Sulfurihydrogenibium sp. (strain YO3AOP1) protein is Glycine--tRNA ligase beta subunit.